An 876-amino-acid chain; its full sequence is MAP7 domain-containing protein 3 (876 aa).

Disordered regions lie at residues 30–139 (AEER…KFKA), 162–200 (GGVMNADKSGKLENKRSSSLSRKDNRLHPRGDMQHVDNT), and 402–438 (TEAPLQARGESRLEASVEGQPEANVEGSPKNPEIDKR). Residues 39–54 (INSSAGANKRSSSTPD) are compositionally biased toward polar residues. The stretch at 58–136 (LKNDVKQQLA…KQKQAEDTEK (79 aa)) forms a coiled coil. 2 stretches are compositionally biased toward basic and acidic residues: residues 60 to 139 (NDVK…KFKA) and 169 to 196 (KSGKLENKRSSSLSRKDNRLHPRGDMQH). Residues Ser417 and Ser483 each carry the phosphoserine modification. Coiled-coil stretches lie at residues 549–578 (IQIRHAAYEQSKNEKERLQKEETKQRIARK) and 626–658 (SAMMKSRDSAEQRKKEQENILQHWQERLERRKA). Disordered stretches follow at residues 558–683 (QSKN…EIFP) and 742–783 (IQGK…NPNH). Basic and acidic residues-rich tracts occupy residues 559-590 (SKNEKERLQKEETKQRIARKPEIMAEKLDKVP) and 630-659 (KSRDSAEQRKKEQENILQHWQERLERRKAS). Residues 665–679 (SEDEADDEGESEDSL) show a composition bias toward acidic residues. Positions 750–763 (SAKKPPTRPIRSRK) are enriched in basic residues. Over residues 771 to 782 (IRPTQSASSNPN) the composition is skewed to polar residues.

It belongs to the MAP7 family. High expression in lung, skeletal muscle, brain, and kidney, with much weaker expression in spleen, small intestine, liver, and heart.

The protein resides in the cytoplasm. Its subcellular location is the cytoskeleton. It is found in the spindle. Functionally, promotes the assembly and stability of microtubules. This chain is MAP7 domain-containing protein 3 (Map7d3), found in Mus musculus (Mouse).